A 334-amino-acid polypeptide reads, in one-letter code: MTSLTQYFEQHPKLPQTQAVIDVITTITNVGKQITDLLRQGALADIHGEAGAENVQGEQQKKLDVIANDLLLEALTANKHCAGVASEELDDATPANESGELLVLFDPLDGSSNIDINMPTGTIFSILPHNNKGQAAQNADFLQKGTEQLAAGYLLYGSSAMLAFTLSESLDANNEGVVMFSLNPSTGEFELVKNNITIDADTKEYAINASNARHWLPPMQQYINELLAGSSGPRGKNFNTRWVAAMVGDVHRILCRGGIFIYPKDTKDPNKAGKLRLMYEANPMSLLIERAGGASTDALNRIMDCEPTDIHQRVAVVLGAKNEVEYVQKLHQQA.

Residues Glu87, Asp106, Leu108, and Asp109 each contribute to the Mg(2+) site. Substrate is bound by residues 109–112, Asn208, and Lys274; that span reads DGSS. Glu280 provides a ligand contact to Mg(2+).

It belongs to the FBPase class 1 family. In terms of assembly, homotetramer. It depends on Mg(2+) as a cofactor.

It localises to the cytoplasm. The catalysed reaction is beta-D-fructose 1,6-bisphosphate + H2O = beta-D-fructose 6-phosphate + phosphate. It participates in carbohydrate biosynthesis; gluconeogenesis. This Psychrobacter sp. (strain PRwf-1) protein is Fructose-1,6-bisphosphatase class 1.